The chain runs to 463 residues: Glycine--tRNA ligase (463 aa).

2 residues coordinate substrate: R98 and E174. ATP contacts are provided by residues R206–E208, F216–F221, E290–L291, and G334–R337. Position 221-225 (F221–E225) interacts with substrate. Residue E330 to G334 participates in substrate binding.

It belongs to the class-II aminoacyl-tRNA synthetase family. As to quaternary structure, homodimer.

It is found in the cytoplasm. It catalyses the reaction tRNA(Gly) + glycine + ATP = glycyl-tRNA(Gly) + AMP + diphosphate. Catalyzes the attachment of glycine to tRNA(Gly). The protein is Glycine--tRNA ligase of Staphylococcus aureus (strain Mu50 / ATCC 700699).